The primary structure comprises 542 residues: MEKDTKQVDIIFRSKLPDIYIPNHLPLHSYCFENISEFSSRPCLINGANKQIYTYADVELNSRKVAAGLHKQGIQPKDTIMILLPNSPEFVFAFIGASYLGAISTMANPLFTPAEVVKQAKASSAKIIVTQACHVNKVKDYAFENDVKIICIDSAPEGCLHFSVLTQANEHDIPEVEIQPDDVVALPYSSGTTGLPKGVMLTHKGLVTSVAQQVDGENPNLYIHSEDVMLCVLPLFHIYSLNSVLLCGLRVGAAILIMQKFDIVSFLELIQRYKVTIGPFVPPIVLAIAKSPMVDDYDLSSVRTVMSGAAPLGKELEDTVRAKFPNAKLGQGYGMTEAGPVLAMCLAFAKEPFEIKSGACGTVVRNAEMKIVDPKTGNSLPRNQSGEICIRGDQIMKGYLNDPEATARTIDKEGWLYTGDIGYIDDDDELFIVDRLKELIKYKGFQVAPAELEALLLNHPNISDAAVVPMKDEQAGEVPVAFVVRSNGSTITEDEVKDFISKQVIFYKRIKRVFFVDAIPKSPSGKILRKDLRAKLAAGLPN.

6 residues coordinate ATP: Ser-189, Ser-190, Gly-191, Thr-192, Thr-193, and Lys-197. Residues Tyr-239 and Ser-243 each coordinate (E)-4-coumaroyl-AMP. (E)-caffeoyl-AMP is bound by residues Tyr-239 and Ser-243. Residues Tyr-239 and Ser-243 each coordinate (E)-feruloyl-AMP. Lys-260 is a CoA binding site. Positions 262-331 (DIVSFLELIQ…AKFPNAKLGQ (70 aa)) are SBD1. Ala-309 is a binding site for (E)-4-coumaroyl-AMP. A (E)-caffeoyl-AMP-binding site is contributed by Ala-309. Position 309 (Ala-309) interacts with (E)-feruloyl-AMP. ATP-binding residues include Gln-331, Gly-332, and Thr-336. (E)-4-coumaroyl-AMP is bound by residues Gly-332, Thr-336, Met-344, Asp-420, Arg-435, Lys-437, and Lys-441. The (E)-caffeoyl-AMP site is built by Gly-332, Thr-336, Met-344, Asp-420, Arg-435, Lys-437, and Lys-441. Positions 332, 336, 344, 420, 435, 437, and 441 each coordinate (E)-feruloyl-AMP. The AMP site is built by Gly-332 and Thr-336. The SBD2 stretch occupies residues 332–399 (GYGMTEAGPV…IRGDQIMKGY (68 aa)). ATP contacts are provided by Asp-420 and Arg-435. Asp-420 serves as a coordination point for AMP. AMP is bound by residues Lys-437 and Lys-441. 2 residues coordinate CoA: Lys-443 and Gly-444. Gln-446 is an AMP binding site. Lys-526 is an ATP binding site.

This sequence belongs to the ATP-dependent AMP-binding enzyme family. Requires Mg(2+) as cofactor. As to expression, mainly expressed in old stems and, to a lower extent, in flowers (e.g. in ovary), leaves, young stems, shoot tips and patel limbs.

It carries out the reaction (E)-4-coumarate + ATP + CoA = (E)-4-coumaroyl-CoA + AMP + diphosphate. The enzyme catalyses (E)-caffeate + ATP + CoA = (E)-caffeoyl-CoA + AMP + diphosphate. The catalysed reaction is (E)-ferulate + ATP + CoA = (E)-feruloyl-CoA + AMP + diphosphate. It catalyses the reaction (E)-cinnamate + ATP + CoA = (E)-cinnamoyl-CoA + AMP + diphosphate. It carries out the reaction (E)-4-coumarate + ATP + H(+) = (E)-4-coumaroyl-AMP + diphosphate. The enzyme catalyses (E)-4-coumaroyl-AMP + CoA = (E)-4-coumaroyl-CoA + AMP + H(+). The catalysed reaction is (E)-caffeate + ATP + H(+) = (E)-caffeoyl-AMP + diphosphate. It catalyses the reaction (E)-caffeoyl-AMP + CoA = (E)-caffeoyl-CoA + AMP + H(+). It carries out the reaction (E)-ferulate + ATP + H(+) = (E)-feruloyl-AMP + diphosphate. The enzyme catalyses (E)-feruloyl-AMP + CoA = (E)-feruloyl-CoA + AMP + H(+). It participates in phytoalexin biosynthesis; 3,4',5-trihydroxystilbene biosynthesis; 3,4',5-trihydroxystilbene from trans-4-coumarate: step 1/2. Major enzyme of the phenylpropanoid pathway that mediates the production of several precursors for numerous metabolites and regulates carbon flow. Catalyzes the formation of CoA thioesters using 4-coumarate, ferulate, caffeate, and cinnamate as substrates. Follows a two-step reaction mechanism, wherein a (hydroxy)cinnamate substrate first undergoes adenylation by ATP leading to an acyl-AMP, followed by a thioesterification in the presence of CoA to yield the final (hydroxy)cinnamoyl-CoA product. Almost inactive toward sinapate. The sequence is that of 4-coumarate--CoA ligase 2 from Nicotiana tabacum (Common tobacco).